Consider the following 467-residue polypeptide: Prenyltransferase GME11375 (467 aa).

E93 contributes to the L-tryptophan binding site. Dimethylallyl diphosphate-binding residues include R108, K196, Y198, K266, Y268, and Y436.

The protein belongs to the tryptophan dimethylallyltransferase family.

It participates in secondary metabolite biosynthesis. Prenyltransferase; part of the gene cluster that mediates the biosynthesis of dibenzodioxocinones such as pestalotiollide B, a novel class of inhibitors against cholesterol ester transfer protein (CEPT). The biosynthesis initiates from condensation of acetate and malonate units catalyzed by the non-reducing PKS pks8/GME11356. Pks8/GME11356 lacks a thioesterase (TE) domain, which is important to the cyclizing of the third ring of atrochrysone carboxylic acid, and the esterase GME11355 might play the role of TE and catalyzes the cyclization reaction of the C ring. The lactamase-like protein GME11357 (or other beta-lactamases in Pestalotiopsis microspora) probably hydrolyzes the thioester bond between the ACP of pks8/GME11356 and the intermediate to release atrochrysone carboxylic acid, which is spontaneously dehydrates to form endocrocin anthrone. Endocrocin anthrone is further converted to emodin via the endocrocin intermediate. Emodin is then oxidized by several enzymes such as the Baeyer-Villiger oxidase GME11358, the oxidoreductase GME11367, the short chain dehydrogenase/reductase GME11373, as well as by other oxidoreductases from the cluster, to modify the A and C rings and open the B ring, and finally yield monodictyphenone. The prenyltransferase GME11375 may catalyze the addition reaction between the C5 side chains and the carbon bone of dibenzodioxocinones. The remaining biochemical reactions to the final product dibenzodioxocinones should be methylation catalyzed by methyltransferase GME11366 and reduction and lactonization reaction catalyzed by a series of oxidordeuctases. This is Prenyltransferase GME11375 from Pestalotiopsis microspora.